A 1066-amino-acid polypeptide reads, in one-letter code: Zinc finger and BTB domain-containing protein 21 (1066 aa).

Positions 30–96 (CDVLLIVGDQ…IYSSSLFVEK (67 aa)) constitute a BTB domain. The segment at 30 to 96 (CDVLLIVGDQ…IYSSSLFVEK (67 aa)) is mediates homodimerization. Residue Lys-40 forms a Glycyl lysine isopeptide (Lys-Gly) (interchain with G-Cter in SUMO1); alternate linkage. Lys-40 is covalently cross-linked (Glycyl lysine isopeptide (Lys-Gly) (interchain with G-Cter in SUMO2); alternate). Residues 154-177 (SRNEAQGKTVSQNQPDVSHTSRPS) are compositionally biased toward polar residues. The segment at 154–196 (SRNEAQGKTVSQNQPDVSHTSRPSPSIAVKANTNKPHVPKPIE) is disordered. Residues Lys-255, Lys-266, Lys-273, Lys-312, and Lys-337 each participate in a glycyl lysine isopeptide (Lys-Gly) (interchain with G-Cter in SUMO2) cross-link. Ser-345 and Ser-381 each carry phosphoserine. Residue Lys-383 forms a Glycyl lysine isopeptide (Lys-Gly) (interchain with G-Cter in SUMO2) linkage. Basic and acidic residues predominate over residues 388–399 (DCSEKTALDDRP). Disordered regions lie at residues 388 to 442 (DCSE…DPSD), 454 to 485 (TAAASSSSVTRDLSLKTEDDQKDMSRLPAKRR), and 498 to 525 (KVNEHGSPVSEDNFEEGSSPTLLDADFP). Phosphoserine is present on residues Ser-411 and Ser-422. Residue Lys-430 forms a Glycyl lysine isopeptide (Lys-Gly) (interchain with G-Cter in SUMO2) linkage. Position 431 is a phosphothreonine (Thr-431). 3 positions are modified to phosphoserine: Ser-434, Ser-435, and Ser-438. Residues 466-478 (LSLKTEDDQKDMS) show a composition bias toward basic and acidic residues. Glycyl lysine isopeptide (Lys-Gly) (interchain with G-Cter in SUMO2) cross-links involve residues Lys-469 and Lys-475. C2H2-type zinc fingers lie at residues 546–569 (FKCKHCLKIFRSTAGLHRHVNMYH) and 575–598 (YACDICHKRFHTNFKVWTHCQTQH). The residue at position 605 (Ser-605) is a Phosphoserine. Residues Lys-617, Lys-643, and Lys-659 each participate in a glycyl lysine isopeptide (Lys-Gly) (interchain with G-Cter in SUMO2) cross-link. The segment at 670-692 (YICTYCGKAYRFLSQFKQHIKMH) adopts a C2H2-type 3 zinc-finger fold. Lys-702 participates in a covalent cross-link: Glycyl lysine isopeptide (Lys-Gly) (interchain with G-Cter in SUMO2). At Ser-714 the chain carries Phosphoserine. The segment at 748–770 (AVCPYCSLRFFSPELKQEHESKC) adopts a C2H2-type 4; atypical zinc-finger fold. Glycyl lysine isopeptide (Lys-Gly) (interchain with G-Cter in SUMO2) cross-links involve residues Lys-763 and Lys-785. The C2H2-type 5 zinc-finger motif lies at 775–798 (LTCLECMRTFKSSFSIWRHQVEVH). The disordered stretch occupies residues 806–840 (TENFSLPVLDHNGDVTGSSRPQSQPEPNKVNHIVT). Over residues 820–831 (VTGSSRPQSQPE) the composition is skewed to polar residues. Lys-875 is covalently cross-linked (Glycyl lysine isopeptide (Lys-Gly) (interchain with G-Cter in SUMO2)). Lys-879 participates in a covalent cross-link: Glycyl lysine isopeptide (Lys-Gly) (interchain with G-Cter in SUMO1); alternate. Lys-879 is covalently cross-linked (Glycyl lysine isopeptide (Lys-Gly) (interchain with G-Cter in SUMO2); alternate). The tract at residues 879–906 (KEEPVEEAEEEAPEASTAPKEAGPSKEA) is disordered. Positions 882–891 (PVEEAEEEAP) are enriched in acidic residues. The segment at 909 to 932 (WPCEKCGKMFTVHKQLERHQELLC) adopts a C2H2-type 6; atypical zinc-finger fold. Lys-935 participates in a covalent cross-link: Glycyl lysine isopeptide (Lys-Gly) (interchain with G-Cter in SUMO2). Residues 937–959 (FICHVCNKAFRTNFRLWSHFQSH) form a C2H2-type 7 zinc finger. Residues 963–1014 (ASEESAHKESEVCPVPTNSPSPPPLPPPPPLPKIQPLEPDSPTGLSENPTPA) are disordered. The span at 979 to 995 (TNSPSPPPLPPPPPLPK) shows a compositional bias: pro residues. Ser-1003 bears the Phosphoserine mark. Residues 1043 to 1065 (FMCKLCHRTFKTAFSLWSHEQTH) form a C2H2-type 8 zinc finger.

As to quaternary structure, homodimer. Interacts with ZBTB14. Ubiquitous in fetal and adult tissues.

The protein resides in the nucleus. Acts as a transcription repressor. The sequence is that of Zinc finger and BTB domain-containing protein 21 (ZBTB21) from Homo sapiens (Human).